The primary structure comprises 227 residues: Phosphoribosylformylglycinamidine synthase subunit PurQ (227 aa).

One can recognise a Glutamine amidotransferase type-1 domain in the interval 3–227 (FAVCVFPGSN…LMLWYSLLSD (225 aa)). The Nucleophile role is filled by Cys86. Active-site residues include His203 and Glu205.

Part of the FGAM synthase complex composed of 1 PurL, 1 PurQ and 2 PurS subunits.

It is found in the cytoplasm. It catalyses the reaction N(2)-formyl-N(1)-(5-phospho-beta-D-ribosyl)glycinamide + L-glutamine + ATP + H2O = 2-formamido-N(1)-(5-O-phospho-beta-D-ribosyl)acetamidine + L-glutamate + ADP + phosphate + H(+). The catalysed reaction is L-glutamine + H2O = L-glutamate + NH4(+). Its pathway is purine metabolism; IMP biosynthesis via de novo pathway; 5-amino-1-(5-phospho-D-ribosyl)imidazole from N(2)-formyl-N(1)-(5-phospho-D-ribosyl)glycinamide: step 1/2. In terms of biological role, part of the phosphoribosylformylglycinamidine synthase complex involved in the purines biosynthetic pathway. Catalyzes the ATP-dependent conversion of formylglycinamide ribonucleotide (FGAR) and glutamine to yield formylglycinamidine ribonucleotide (FGAM) and glutamate. The FGAM synthase complex is composed of three subunits. PurQ produces an ammonia molecule by converting glutamine to glutamate. PurL transfers the ammonia molecule to FGAR to form FGAM in an ATP-dependent manner. PurS interacts with PurQ and PurL and is thought to assist in the transfer of the ammonia molecule from PurQ to PurL. This is Phosphoribosylformylglycinamidine synthase subunit PurQ from Aquifex aeolicus (strain VF5).